Consider the following 725-residue polypeptide: Polyribonucleotide nucleotidyltransferase (725 aa).

Residues Asp487 and Asp493 each coordinate Mg(2+). Residues 554–613 (PRIETMQIPTDKIREVIGTGGKVIREIVEKTGAKIDIQDTGVVKIASSDGKAIKAAYNWI) form the KH domain. In terms of domain architecture, S1 motif spans 623 to 691 (GMIYDGTVVK…ERGKIRLSMK (69 aa)). The disordered stretch occupies residues 699–725 (EDLTEKLKAEREADRNRERQARQSAGE). The span at 701–719 (LTEKLKAEREADRNRERQA) shows a compositional bias: basic and acidic residues.

The protein belongs to the polyribonucleotide nucleotidyltransferase family. It depends on Mg(2+) as a cofactor.

It is found in the cytoplasm. The catalysed reaction is RNA(n+1) + phosphate = RNA(n) + a ribonucleoside 5'-diphosphate. Its function is as follows. Involved in mRNA degradation. Catalyzes the phosphorolysis of single-stranded polyribonucleotides processively in the 3'- to 5'-direction. This Methylobacterium sp. (strain 4-46) protein is Polyribonucleotide nucleotidyltransferase.